The sequence spans 78 residues: Antimicrobial peptide marcin-18 (78 aa).

The first 23 residues, 1-23, serve as a signal peptide directing secretion; that stretch reads MQFKKQLMVIFLAYFLVVNESEA. Arg-41 carries the post-translational modification Arginine amide. Positions 42–78 are excised as a propeptide; it reads RKNQRSRSIMKRDLENLFDPYQRNLELDRLLKQLPNY.

It belongs to the non-disulfide-bridged peptide (NDBP) superfamily. Medium-length antimicrobial peptide (group 3) family. In terms of tissue distribution, expressed by the venom gland.

It localises to the secreted. The protein localises to the target cell membrane. Antimicrobial peptide with potent activity against bacteria. Acts by fastly disrupting the bacterial membrane. Shows activity against Gram-positive bacteria S.aureus (MIC=1.5-2.9 uM) and S.epidermidis (MIC=2.9 uM), M.luteus (MIC=23.4 uM), B.thuringiensis (MIC=2.9 uM), B.subtilis (MIC=2.9 uM) and Gram-negative bacteria E.coli (MIC=5.9-11.7 uM) and P.aeruginosa (MIC=5.9 uM), as well as against penicillin (MIC=2.9 uM) and methicillin (MIC=1.5-2.9 uM) resistant bacteria. Antibiotic activity is not affected by major negatively charged components of the prokaryotic cell wall (e.g. lipopolysaccharides and lipoteichoic acid). In vivo, in a mouse model of lethal peritonitis, shows potent antibiotic activity without cytotoxicity, improving the survival rate. This Olivierus martensii (Manchurian scorpion) protein is Antimicrobial peptide marcin-18.